A 141-amino-acid chain; its full sequence is Large ribosomal subunit protein uL11 (141 aa).

The protein belongs to the universal ribosomal protein uL11 family. Part of the ribosomal stalk of the 50S ribosomal subunit. Interacts with L10 and the large rRNA to form the base of the stalk. L10 forms an elongated spine to which L12 dimers bind in a sequential fashion forming a multimeric L10(L12)X complex. Post-translationally, one or more lysine residues are methylated.

Its function is as follows. Forms part of the ribosomal stalk which helps the ribosome interact with GTP-bound translation factors. This is Large ribosomal subunit protein uL11 from Sulfurimonas denitrificans (strain ATCC 33889 / DSM 1251) (Thiomicrospira denitrificans (strain ATCC 33889 / DSM 1251)).